The sequence spans 506 residues: CDK5 regulatory subunit-associated protein 3 (506 aa).

3 consecutive short sequence motifs (shuffled ATG8-binding motif) follow at residues 267-270, 292-295, and 310-313; these read IDWG. Residues 269–506 are required for interaction with UFL1 and mediates interaction with CHEK1; that stretch reads WGDFGVEAVS…RPVNLMGTSL (238 aa). Residues 355–370 are RPL10a-binding domain (RBD); that stretch reads DELMELEIFLAQRAVE. A Glycyl lysine isopeptide (Lys-Gly) (interchain with G-Cter in SUMO2) cross-link involves residue Lys-450.

This sequence belongs to the CDK5RAP3 family. Substrate adapter component of the UFM1 ribosome E3 ligase (UREL) complex, composed of UFL1, DDRGK1 and CDK5RAP3. Interaction with UFL1 anchors CDK5RAP3 in the cytoplasm, preventing its translocation to the nucleus which allows expression of the CCND1 cyclin and progression of cells through the G1/S transition. Interacts with ATG8 family proteins MAP1LC3A, MAP1LC3B, GABARAP, GABARAPL1 and GABARAPL2. Interacts with CDK5R1; competes with CDK5RAP1 and CDK5RAP2. Interacts with RELA. Interacts with CHEK1; may negatively regulate CHEK1 and thereby stimulate entry into mitosis. Interacts with CDKN2A/ARF and MDM2; forms a ternary complex involved in regulation of p53/TP53. Interacts with MAPK14. Interacts with CCNB1. Interacts with TUBG1; may regulate CDK5RAP3 in mitotic G2/M transition checkpoint. As to quaternary structure, (Microbial infection) Interacts with hepatitis B virus large envelope protein mutant pre-s2; promotes mitotic entry. May be phosphorylated by CDK5. In terms of processing, ubiquitinated. Probably triggers proteasomal degradation and is negatively regulated by UFL1. Post-translationally, may be ufmylated. Cleaved by caspases early during apoptosis, the resulting peptides may play a role in rupture of the nuclear envelope. Ubiquitously expressed. Expressed in heart, brain, placenta, lung, liver, skeletal muscle, kidney and pancreas. Isoform 3 is expressed in kidney, liver, skeletal muscle and placenta.

It is found in the endoplasmic reticulum membrane. The protein resides in the cytoplasm. It localises to the nucleus. Its subcellular location is the cytoskeleton. The protein localises to the microtubule organizing center. It is found in the centrosome. In terms of biological role, substrate adapter of E3 ligase complexes mediating ufmylation, the covalent attachment of the ubiquitin-like modifier UFM1 to substrate proteins, and which is involved in various processes, such as ribosome recycling and reticulophagy (also called ER-phagy). As part of the UREL complex, plays a key role in ribosome recycling by promoting mono-ufmylation of RPL26/uL24 subunit of the 60S ribosome. Ufmylation of RPL26/uL24 occurs on free 60S ribosomes following ribosome dissociation: it weakens the junction between post-termination 60S subunits and SEC61 translocons, promoting release and recycling of the large ribosomal subunit from the endoplasmic reticulum membrane. Ufmylation of RPL26/uL24 and subsequent 60S ribosome recycling either take place after normal termination of translation or after ribosome stalling during cotranslational translocation at the endoplasmic reticulum. Within the UREL complex, CDK5RAP3 acts as a substrate adapter that constrains UFL1 ligase activity to mono-ufmylate RPL26/uL24 at 'Lys-134'. The UREL complex is also involved in reticulophagy in response to endoplasmic reticulum stress by promoting ufmylation of proteins such as CYB5R3, thereby promoting lysosomal degradation of ufmylated proteins. Also acts as a regulator of transcription: negatively regulates NF-kappa-B-mediated gene transcription through the control of RELA phosphorylation. Also regulates mitotic G2/M transition checkpoint and mitotic G2 DNA damage checkpoint. Through its interaction with CDKN2A/ARF and MDM2 may induce MDM2-dependent p53/TP53 ubiquitination, stabilization and activation in the nucleus, thereby promoting G1 cell cycle arrest and inhibition of cell proliferation. May also play a role in the rupture of the nuclear envelope during apoptosis. May regulate MAPK14 activity by regulating its dephosphorylation by PPM1D/WIP1. Required for liver development. Functionally, (Microbial infection) May be negatively regulated by hepatitis B virus large envelope protein mutant pre-s2 to promote mitotic entry. The chain is CDK5 regulatory subunit-associated protein 3 from Homo sapiens (Human).